Here is a 279-residue protein sequence, read N- to C-terminus: uncharacterized protein (279 aa).

The first 31 residues, 1–31 (MLVQSRTLVTAILSCSLVFGTTVNGASVAIA), serve as a signal peptide directing secretion.

This is an uncharacterized protein from Corynebacterium glutamicum (strain ATCC 13032 / DSM 20300 / JCM 1318 / BCRC 11384 / CCUG 27702 / LMG 3730 / NBRC 12168 / NCIMB 10025 / NRRL B-2784 / 534).